We begin with the raw amino-acid sequence, 620 residues long: Probably inactive leucine-rich repeat receptor-like protein kinase At5g48380 (620 aa).

An N-terminal signal peptide occupies residues 1–27; the sequence is MMMGRLVFVIWLYNCLCLLLLSSLVDA. Topologically, residues 28-228 are extracellular; sequence DQANIDCLRT…SASSSRGKVV (201 aa). N-linked (GlcNAc...) asparagine glycans are attached at residues Asn-56, Asn-111, Asn-119, and Asn-147. LRR repeat units follow at residues 101–124, 126–148, 150–172, and 174–196; these read DLTGLDLSRNNFSGPLPANISTLI, LVTILDLSYNSFSGEIPMLISNI, FLNTLMLQHNQFTGTLPPQLAQL, and RLKTFSVSDNRLVGPIPNFNQTL. Asn-193 carries N-linked (GlcNAc...) asparagine glycosylation. A helical membrane pass occupies residues 229–249; it reads IIAAVGGLTAAALVVGVVLFF. The Cytoplasmic segment spans residues 250–620; sequence YFRKLGAVRK…DFIEELIVAR (371 aa). Thr-300 carries the post-translational modification Phosphothreonine. The 294-residue stretch at 303-596 folds into the Protein kinase domain; sequence FKKDNIIATG…RAIGESYNFT (294 aa). ATP is bound by residues 309–317 and Lys-331; that span reads IATGRTGTM. Thr-463 is subject to Phosphothreonine. Tyr-479 carries the post-translational modification Phosphotyrosine. A Phosphothreonine modification is found at Thr-482.

It belongs to the protein kinase superfamily. Ser/Thr protein kinase family.

It localises to the cell membrane. In Arabidopsis thaliana (Mouse-ear cress), this protein is Probably inactive leucine-rich repeat receptor-like protein kinase At5g48380.